The following is a 231-amino-acid chain: 5'-methylthioadenosine/S-adenosylhomocysteine nucleosidase (231 aa).

The active-site Proton acceptor is the glutamate 13. Residues glycine 79, methionine 153, and 174 to 175 (ME) each bind substrate. Residue aspartate 198 is the Proton donor of the active site.

The protein belongs to the PNP/UDP phosphorylase family. MtnN subfamily.

The catalysed reaction is S-adenosyl-L-homocysteine + H2O = S-(5-deoxy-D-ribos-5-yl)-L-homocysteine + adenine. The enzyme catalyses S-methyl-5'-thioadenosine + H2O = 5-(methylsulfanyl)-D-ribose + adenine. It carries out the reaction 5'-deoxyadenosine + H2O = 5-deoxy-D-ribose + adenine. It functions in the pathway amino-acid biosynthesis; L-methionine biosynthesis via salvage pathway; S-methyl-5-thio-alpha-D-ribose 1-phosphate from S-methyl-5'-thioadenosine (hydrolase route): step 1/2. Its function is as follows. Catalyzes the irreversible cleavage of the glycosidic bond in both 5'-methylthioadenosine (MTA) and S-adenosylhomocysteine (SAH/AdoHcy) to adenine and the corresponding thioribose, 5'-methylthioribose and S-ribosylhomocysteine, respectively. Also cleaves 5'-deoxyadenosine, a toxic by-product of radical S-adenosylmethionine (SAM) enzymes, into 5-deoxyribose and adenine. This is 5'-methylthioadenosine/S-adenosylhomocysteine nucleosidase from Halalkalibacterium halodurans (strain ATCC BAA-125 / DSM 18197 / FERM 7344 / JCM 9153 / C-125) (Bacillus halodurans).